The chain runs to 169 residues: Large ribosomal subunit protein uL10 (169 aa).

The protein belongs to the universal ribosomal protein uL10 family. As to quaternary structure, part of the ribosomal stalk of the 50S ribosomal subunit. The N-terminus interacts with L11 and the large rRNA to form the base of the stalk. The C-terminus forms an elongated spine to which L12 dimers bind in a sequential fashion forming a multimeric L10(L12)X complex.

Functionally, forms part of the ribosomal stalk, playing a central role in the interaction of the ribosome with GTP-bound translation factors. This is Large ribosomal subunit protein uL10 from Rickettsia africae (strain ESF-5).